The following is a 129-amino-acid chain: Cortical cell-delineating protein (129 aa).

The segment at residues 1–19 (MAPKVALFLALSLLFAATA) is a signal peptide (or 21). N-linked (GlcNAc...) asparagine glycosylation is present at N25. 2 consecutive repeat copies span residues 29–34 (PVVPTP) and 35–40 (PVVPTP). The tract at residues 29–40 (PVVPTPPVVPTP) is 2 X 6 AA tandem repeats of P-V-V-P-T-P.

The protein to carrot DC2.15 and PEMB3. As to expression, cortical ground meristem of developing roots.

Functionally, delineates a novel subset of developing cortical cells. It is probably involved in some aspect of transport of molecules to or from the vasculature. This is Cortical cell-delineating protein from Zea mays (Maize).